Reading from the N-terminus, the 461-residue chain is GTPase Era, mitochondrial (461 aa).

Residues 1–35 (MAAPWLQRWRGAYAGPSGPLRLVRLHGVQRSSWRA) constitute a mitochondrion transit peptide. A disordered region spans residues 39-73 (AAGAFGAGPHPGPPQRAANPGPGPHPPPVATSREK). The Era-type G domain maps to 89-354 (KVLRISIIGA…QYLLMQAKPG (266 aa)). Positions 97–104 (GAPNSGKS) are G1. 97 to 104 (GAPNSGKS) is a GTP binding site. The tract at residues 123–127 (HTTRC) is G2. Residues 144–147 (DTPG) are G3. GTP contacts are provided by residues 144–148 (DTPGL) and 213–216 (NKVD). The interval 213 to 216 (NKVD) is G4. The interval 260-319 (KVTQTPPPENRARESPCQLETDKAQEGSSLDNSSDVKASESSLDTEAREQKPYKYGDQKN) is disordered. Residues 269-284 (NRARESPCQLETDKAQ) show a composition bias toward basic and acidic residues. A compositionally biased stretch (polar residues) spans 285–303 (EGSSLDNSSDVKASESSLD). Basic and acidic residues predominate over residues 304–319 (TEAREQKPYKYGDQKN). The G5 stretch occupies residues 332-334 (LAA). A KH type-2 domain is found at 380–461 (ILEYLPLEVP…RLKLKVEVKS (82 aa)).

This sequence belongs to the TRAFAC class TrmE-Era-EngA-EngB-Septin-like GTPase superfamily. Era GTPase family.

It localises to the mitochondrion matrix. The protein resides in the mitochondrion inner membrane. Functionally, probable GTPase that plays a role in the mitochondrial ribosomal small subunit assembly. Specifically binds the 12S mitochondrial rRNA (12S mt-rRNA) to a 33 nucleotide section delineating the 3' terminal stem-loop region. May act as a chaperone that protects the 12S mt-rRNA on the 28S mitoribosomal subunit during ribosomal small subunit assembly. The chain is GTPase Era, mitochondrial (ERAL1) from Gallus gallus (Chicken).